The chain runs to 422 residues: F-box/WD repeat-containing protein 2 (422 aa).

Residues 54–101 (RDFLKLLPLELSFYLLKWLDPQTLLTCCLVSKQWNKVISACTEVWQTA) enclose the F-box domain. 4 WD repeats span residues 146–183 (GHSA…CVYG), 185–221 (QTHT…RTQH), 224–265 (GHTG…NTLT), and 276–314 (LQKC…NCKC). K298 carries the N6-acetyllysine modification.

In terms of assembly, directly interacts with SKP1 and CUL1. Widely expressed during embryogenesis and in adult tissues.

Functionally, substrate-recognition component of the SCF (SKP1-CUL1-F-box protein)-type E3 ubiquitin ligase complex. This chain is F-box/WD repeat-containing protein 2 (Fbxw2), found in Mus musculus (Mouse).